Reading from the N-terminus, the 254-residue chain is tRNA (guanine-N(1)-)-methyltransferase (254 aa).

Residues Gly-117 and 136–141 contribute to the S-adenosyl-L-methionine site; that span reads LGDFVL.

It belongs to the RNA methyltransferase TrmD family. As to quaternary structure, homodimer.

The protein localises to the cytoplasm. It carries out the reaction guanosine(37) in tRNA + S-adenosyl-L-methionine = N(1)-methylguanosine(37) in tRNA + S-adenosyl-L-homocysteine + H(+). Functionally, specifically methylates guanosine-37 in various tRNAs. This chain is tRNA (guanine-N(1)-)-methyltransferase, found in Levilactobacillus brevis (strain ATCC 367 / BCRC 12310 / CIP 105137 / JCM 1170 / LMG 11437 / NCIMB 947 / NCTC 947) (Lactobacillus brevis).